Consider the following 231-residue polypeptide: 5'-methylthioadenosine/S-adenosylhomocysteine nucleosidase (231 aa).

The active-site Proton acceptor is the Glu12. Substrate contacts are provided by residues Gly78, Ile153, and 174-175 (ME). Asp198 serves as the catalytic Proton donor.

It belongs to the PNP/UDP phosphorylase family. MtnN subfamily.

The enzyme catalyses S-adenosyl-L-homocysteine + H2O = S-(5-deoxy-D-ribos-5-yl)-L-homocysteine + adenine. It carries out the reaction S-methyl-5'-thioadenosine + H2O = 5-(methylsulfanyl)-D-ribose + adenine. The catalysed reaction is 5'-deoxyadenosine + H2O = 5-deoxy-D-ribose + adenine. Its pathway is amino-acid biosynthesis; L-methionine biosynthesis via salvage pathway; S-methyl-5-thio-alpha-D-ribose 1-phosphate from S-methyl-5'-thioadenosine (hydrolase route): step 1/2. Its function is as follows. Catalyzes the irreversible cleavage of the glycosidic bond in both 5'-methylthioadenosine (MTA) and S-adenosylhomocysteine (SAH/AdoHcy) to adenine and the corresponding thioribose, 5'-methylthioribose and S-ribosylhomocysteine, respectively. Also cleaves 5'-deoxyadenosine, a toxic by-product of radical S-adenosylmethionine (SAM) enzymes, into 5-deoxyribose and adenine. This Shewanella putrefaciens (strain CN-32 / ATCC BAA-453) protein is 5'-methylthioadenosine/S-adenosylhomocysteine nucleosidase.